The following is a 332-amino-acid chain: L-lactate dehydrogenase A chain (332 aa).

Ala2 carries the post-translational modification N-acetylalanine. Lys5 carries the post-translational modification N6-acetyllysine; alternate. At Lys5 the chain carries N6-succinyllysine; alternate. The residue at position 14 (Lys14) is an N6-acetyllysine. 29–57 (GAVGMACAISILMKDLADELALVDVMEDK) is a binding site for NAD(+). Lys57 carries the post-translational modification N6-acetyllysine; alternate. Residue Lys57 forms a Glycyl lysine isopeptide (Lys-Gly) (interchain with G-Cter in SUMO2); alternate linkage. Lys81 is subject to N6-acetyllysine. Residue Arg99 participates in NAD(+) binding. Residue Arg106 participates in substrate binding. N6-acetyllysine; alternate is present on Lys118. Lys118 carries the post-translational modification N6-succinyllysine; alternate. Residue Lys126 is modified to N6-acetyllysine. NAD(+) is bound at residue Asn138. 2 residues coordinate substrate: Asn138 and Arg169. His193 (proton acceptor) is an active-site residue. N6-acetyllysine is present on residues Lys224 and Lys232. Tyr239 is subject to Phosphotyrosine. Lys243 is modified (N6-acetyllysine). Thr248 is a substrate binding site. Thr309 is subject to Phosphothreonine. Phosphoserine is present on Ser310. Lys318 is modified (N6-acetyllysine; alternate). An N6-succinyllysine; alternate modification is found at Lys318. Position 322 is a phosphothreonine (Thr322).

It belongs to the LDH/MDH superfamily. LDH family. As to quaternary structure, homotetramer. Interacts with PTEN upstream reading frame protein MP31. ISGylated.

The protein localises to the cytoplasm. The catalysed reaction is (S)-lactate + NAD(+) = pyruvate + NADH + H(+). The protein operates within fermentation; pyruvate fermentation to lactate; (S)-lactate from pyruvate: step 1/1. Interconverts simultaneously and stereospecifically pyruvate and lactate with concomitant interconversion of NADH and NAD(+). In Oryctolagus cuniculus (Rabbit), this protein is L-lactate dehydrogenase A chain (LDHA).